Here is a 458-residue protein sequence, read N- to C-terminus: UDP-N-acetylglucosamine 1-carboxyvinyltransferase (458 aa).

34 to 35 (KN) is a binding site for phosphoenolpyruvate. Arg104 lines the UDP-N-acetyl-alpha-D-glucosamine pocket. Catalysis depends on Cys128, which acts as the Proton donor. The residue at position 128 (Cys128) is a 2-(S-cysteinyl)pyruvic acid O-phosphothioketal. Asp320 and Val342 together coordinate UDP-N-acetyl-alpha-D-glucosamine.

It belongs to the EPSP synthase family. MurA subfamily.

It is found in the cytoplasm. It catalyses the reaction phosphoenolpyruvate + UDP-N-acetyl-alpha-D-glucosamine = UDP-N-acetyl-3-O-(1-carboxyvinyl)-alpha-D-glucosamine + phosphate. The protein operates within cell wall biogenesis; peptidoglycan biosynthesis. Cell wall formation. Adds enolpyruvyl to UDP-N-acetylglucosamine. The sequence is that of UDP-N-acetylglucosamine 1-carboxyvinyltransferase from Prochlorococcus marinus (strain NATL1A).